The primary structure comprises 395 residues: uncharacterized protein (395 aa).

A coiled-coil region spans residues 182–238; the sequence is KKLEDILSTIAEIEDSIELEKILSLDQFLKSKLSNIKITNNQIDEAKAEFKEMFNKK.

This is an uncharacterized protein from Acanthamoeba polyphaga (Amoeba).